An 834-amino-acid chain; its full sequence is WW domain-containing adapter protein with coiled-coil homolog (834 aa).

3 disordered regions span residues 1–247 (MVMH…WSEH), 268–411 (KPKE…SVAT), and 430–504 (VTGA…GAKG). The span at 22–31 (HTSYQSSKYS) shows a compositional bias: low complexity. Basic and acidic residues predominate over residues 33 to 50 (SKRDYERDRSSNYRDRDL). Residues 53–77 (GAGGGGGGGSAGGGGGGSGNGGGPL) show a composition bias toward gly residues. The span at 96–108 (RSHDLRDRSDHRG) shows a compositional bias: basic and acidic residues. Gly residues predominate over residues 109-119 (GGGGNGRGGSG). Composition is skewed to basic and acidic residues over residues 127 to 168 (KMRD…DRRG), 181 to 246 (SSRE…DWSE), and 268 to 303 (KPKEWVDRERNLPRDQHREKDYRDKDRDRDRDDRFS). The region spanning 244 to 271 (WSEHVSSSGKMYYYNCKTEISQWEKPKE) is the WW domain. 2 stretches are compositionally biased toward polar residues: residues 304–314 (RSTYKHSNSSR) and 350–363 (GDSTPTSEASYSLS). Residues 369–384 (HGGGPGGGGPGGGGGS) are compositionally biased toward gly residues. Low complexity-rich tracts occupy residues 402 to 411 (TANSSASVAT) and 431 to 466 (TGATMLPTMSGMLNSNSSNSAGGSSSNASSSSLRNS). The segment covering 472–496 (GSTSGTTVPTLGSQDPHQHHLNSNA) has biased composition (polar residues).

As to expression, expressed in adult head and thorax and in larval central nervous system and fat body.

It localises to the nucleus. The protein localises to the lysosome. In terms of biological role, acts as a linker between gene transcription and histone H2B monoubiquitination at 'Lys-118'. Regulates the cell-cycle checkpoint activation in response to DNA damage. Positive regulator of amino acid starvation-induced autophagy. Also acts as a negative regulator of basal autophagy. Positively regulates mTor activity. Promotes, in an energy-dependent manner, the assembly of the TTT complex and the RUVBL complex composed of pont and rept into the TTT-RUVBL complex. This leads to dimerization of the mTORC1 complex and its subsequent activation. May negatively regulate the ubiquitin proteasome pathway. Required for habituation, a form of non-associative learning. The polypeptide is WW domain-containing adapter protein with coiled-coil homolog (Drosophila melanogaster (Fruit fly)).